The primary structure comprises 273 residues: Undecaprenyl-diphosphatase (273 aa).

8 helical membrane passes run 3-23, 47-67, 90-110, 120-140, 148-168, 186-206, 217-237, and 249-269; these read IILW…EFLP, ALDA…WQDI, LLLG…LLKL, IIAT…QWGS, IGIL…LPGA, PTAA…ATLV, LLIP…LAIA, and WVFI…IALG.

This sequence belongs to the UppP family.

Its subcellular location is the cell inner membrane. It catalyses the reaction di-trans,octa-cis-undecaprenyl diphosphate + H2O = di-trans,octa-cis-undecaprenyl phosphate + phosphate + H(+). Its function is as follows. Catalyzes the dephosphorylation of undecaprenyl diphosphate (UPP). Confers resistance to bacitracin. This chain is Undecaprenyl-diphosphatase, found in Thermosynechococcus vestitus (strain NIES-2133 / IAM M-273 / BP-1).